The following is a 113-amino-acid chain: MPPLTESEFLALADAELGRIERTVERAADEVDADIEIGRVGNVLTLEFDDGSKIIINSQTPMQELWVAARAGGFHFRRNDGRWVDTRSGEELYVALSRYVSQQSEVDVTLVAD.

The protein belongs to the frataxin family.

Its function is as follows. Involved in iron-sulfur (Fe-S) cluster assembly. May act as a regulator of Fe-S biogenesis. This is Iron-sulfur cluster assembly protein CyaY from Ralstonia nicotianae (strain ATCC BAA-1114 / GMI1000) (Ralstonia solanacearum).